The chain runs to 557 residues: Intraflagellar transport protein 56 (557 aa).

Residues 1–30 (MLLSRMKPAVGGEASTSSNEKKRKNKSKKI) are disordered. Basic residues predominate over residues 21–30 (KKRKNKSKKI). TPR repeat units follow at residues 60 to 93 (EHAD…PDCP), 95 to 128 (DVWV…LQNR), 154 to 187 (TEDQ…NREF), and 471 to 504 (ANDC…EGKR).

The protein belongs to the IFT56 family. As to quaternary structure, component of the IFT complex B.

It is found in the cell projection. The protein localises to the cilium. Functionally, component of the intraflagellar transport (IFT) complex B required for transport of proteins in the motile cilium. Required for transport of specific ciliary cargo proteins related to motility, while it is neither required for IFT complex B assembly or motion nor for cilium assembly. Plays a key role in maintaining the integrity of the IFT complex B and the proper ciliary localization of the IFT complex B components. Essential for maintaining proper microtubule organization within the ciliary axoneme. The protein is Intraflagellar transport protein 56 of Danio rerio (Zebrafish).